Consider the following 239-residue polypeptide: Small ribosomal subunit protein uS3 (239 aa).

Positions 39–107 (VRQVLRKKMS…SVHINVIEVR (69 aa)) constitute a KH type-2 domain. Positions 217 to 239 (KQDDISRGDRNADRSSRRSREVR) are disordered.

It belongs to the universal ribosomal protein uS3 family. In terms of assembly, part of the 30S ribosomal subunit. Forms a tight complex with proteins S10 and S14.

Its function is as follows. Binds the lower part of the 30S subunit head. Binds mRNA in the 70S ribosome, positioning it for translation. This chain is Small ribosomal subunit protein uS3, found in Xylella fastidiosa (strain 9a5c).